Reading from the N-terminus, the 549-residue chain is Fas-activated serine/threonine kinase (549 aa).

A disordered region spans residues 1 to 30 (MRRPRGEPGPRAPRPTEGATCAGPGESWSP). The region spanning 477–535 (VVLVLRERWHFCRDGRVLLGSRALRERHLGLMGYQLLPLPFEELESQRGLPQLKSYLRQ) is the RAP domain.

It belongs to the FAST protein kinase family. In terms of assembly, interacts with TIA1; the interactions leads to TIA1 phosphorylation. Interacts with TIAR. Post-translationally, autophosphorylated on serine/threonine residues. Activated by dephosphorylation. As to expression, expressed in heart, brain, placenta, lung, liver, skeletal muscle, kidney and pancreas.

It is found in the mitochondrion matrix. It catalyses the reaction L-seryl-[Fas-activated protein] + ATP = O-phospho-L-seryl-[Fas-activated protein] + ADP + H(+). The catalysed reaction is L-threonyl-[Fas-activated protein] + ATP = O-phospho-L-threonyl-[Fas-activated protein] + ADP + H(+). It carries out the reaction L-seryl-[protein] + ATP = O-phospho-L-seryl-[protein] + ADP + H(+). The enzyme catalyses L-threonyl-[protein] + ATP = O-phospho-L-threonyl-[protein] + ADP + H(+). Functionally, phosphorylates the splicing regulator TIA1, thereby promoting the inclusion of FAS exon 6, which leads to an mRNA encoding a pro-apoptotic form of the receptor. Its function is as follows. Required for the biogenesis of some mitochondrial-encoded mRNAs, specifically stabilizes ND6 (NADH dehydrogenase complex subunit 6) mRNA, and regulates its levels. The chain is Fas-activated serine/threonine kinase (FASTK) from Homo sapiens (Human).